The following is a 1083-amino-acid chain: Solute carrier family 12 member 7 (1083 aa).

Residues 1–55 (MPTNFTVVPVEARADGAGDEAAERTEEPESPESVDQTSPTPGDGNPRENSPFINN) are disordered. The Cytoplasmic portion of the chain corresponds to 1 to 119 (MPTNFTVVPV…RREVKAPRMG (119 aa)). Positions 12–27 (ARADGAGDEAAERTEE) are enriched in basic and acidic residues. Phosphoserine occurs at positions 30 and 33. Threonine 37 carries the post-translational modification Phosphothreonine. A phosphoserine mark is found at serine 50 and serine 62. Residues 120–142 (TFIGVYLPCLQNILGVILFLRLT) traverse the membrane as a discontinuously helical segment. Asparagine 131 and isoleucine 132 together coordinate K(+). Residue valine 135 participates in chloride binding. Over 143–149 (WIVGAAG) the chain is Extracellular. The chain crosses the membrane as a helical span at residues 150–172 (VMESFLIVAMCCTCTMLTAISMS). Residues 173 to 196 (AIATNGVVPAGGSYYMISRSLGPE) lie on the Cytoplasmic side of the membrane. Residues 197 to 225 (FGGAVGLCFYLGTTFAGAMYILGTIEIFL) form a helical membrane-spanning segment. Residues 226–249 (TYISPSAAIFQAETADGEAAALLN) lie on the Extracellular side of the membrane. 2 helical membrane passes run 250–271 (NMRV…VGVK) and 272–300 (YVNK…KTAF). Topologically, residues 301–419 (APPDIPVCLL…PYVLTDIMTY (119 aa)) are extracellular. The N-linked (GlcNAc...) (high mannose) asparagine glycan is linked to asparagine 312. Residues asparagine 331 and asparagine 344 are each glycosylated (N-linked (GlcNAc...) (complex) asparagine). N-linked (GlcNAc...) (high mannose) asparagine glycosylation is present at asparagine 360. The helical transmembrane segment at 420–440 (FTMLVGIYFPSVTGIMAGSNR) threads the bilayer. The K(+) site is built by proline 429 and threonine 432. Proline 429 serves as a coordination point for chloride. The chloride site is built by glycine 433 and isoleucine 434. The Cytoplasmic portion of the chain corresponds to 441 to 450 (SGDLKDAQKS). A helical membrane pass occupies residues 451–473 (IPTGTILAIVTTSFIYLSCIVLF). At 474-504 (GACIEGVVLRDKFGEALQGNLVIGMLAWPSP) the chain is on the extracellular side. A helical transmembrane segment spans residues 505–531 (WVIVIGSFFSTCGAGLQSLTGAPRLLQ). The Cytoplasmic portion of the chain corresponds to 532–554 (AIARDGIIPFLQVFGHGKANGEP). The next 2 membrane-spanning stretches (helical) occupy residues 555-573 (TWAL…LIAS) and 574-598 (LDSV…ACAV). Residue tyrosine 589 participates in chloride binding. At 599–612 (QTLLRTPNWRPRFK) the chain is on the cytoplasmic side. Transmembrane regions (helical) follow at residues 613 to 635 (FYHW…ICSW) and 636 to 651 (YYAL…IYKY). The Cytoplasmic portion of the chain corresponds to 652-1083 (IEYRGAEKEW…GGREVITIYS (432 aa)). The interval 664-680 (GIRGLSLNAARYALLRV) is scissor helix. A phosphothreonine mark is found at threonine 973 and threonine 980.

It belongs to the SLC12A transporter family. K/Cl co-transporter subfamily. Homodimer; adopts a domain-swap conformation at the scissor helices connecting the transmembrane domain and C-terminal domain. Heterodimer with K-Cl cotransporter SLC12A5. Glycosylation at Asn-331 and Asn-344 is required for proper trafficking to the cell surface, and augments protein stability. As to expression, detected in proximal tubules in the kidney, in particular in basolateral membranes of intercalated cells in the cortical collecting duct.

It localises to the cell membrane. The catalysed reaction is K(+)(in) + chloride(in) = K(+)(out) + chloride(out). Its activity is regulated as follows. Activated by N-ethylmaleimide (NEM). Inhibited by furosemide, DIDS and bumetanide. The inhibition is much stronger in the presence of 50 mM K(+) in the uptake medium. Inhibited by DIOA. Inhibited by WNK3. Its function is as follows. Mediates electroneutral potassium-chloride cotransport when activated by cell swelling. May mediate K(+) uptake into Deiters' cells in the cochlea and contribute to K(+) recycling in the inner ear. Important for the survival of cochlear outer and inner hair cells and the maintenance of the organ of Corti. May be required for basolateral Cl(-) extrusion in the kidney and contribute to renal acidification. In Mus musculus (Mouse), this protein is Solute carrier family 12 member 7 (Slc12a7).